Consider the following 782-residue polypeptide: Host cell factor homolog hcf-1 (782 aa).

Residues 1-25 (MDEDVGLEATNYSRGDESRSEEQEK) are disordered. Basic and acidic residues predominate over residues 14-25 (RGDESRSEEQEK). Kelch repeat units follow at residues 55–103 (LIVI…SLGN), 105–151 (IYRF…RIGH), 161–222 (KAYV…IYEK), 227–271 (RMVV…PRSL), and 280–324 (KMFV…VPLH). A phosphoserine mark is found at Ser-423, Ser-431, and Ser-449. Residues 423–434 (SPIKRATTSPRK) are compositionally biased toward polar residues. A disordered region spans residues 423–553 (SPIKRATTSP…EENGDDDLPW (131 aa)). Polar residues-rich tracts occupy residues 456–469 (TAPS…TTYT) and 496–513 (TASP…SSTC). Ser-498 is subject to Phosphoserine. Over residues 537–552 (GETDEMKEENGDDDLP) the composition is skewed to acidic residues.

In terms of assembly, interacts with daf-16/FOXO. Interacts with deacetylase sir-2.1. Interacts with the 14-3-3 family proteins ftt-2 and par-5. Phosphorylated at multiple serine residues. Phosphorylation is developmentally regulated, occurring in embryos but not L1 larvae. Phosphorylation may be cell-cycle-regulated.

It localises to the nucleus. Its function is as follows. Transcriptional coregulator. Involved in control of the cell cycle and in modulating mitotic histone phosphorylation. Plays a role in modulating lifespan by regulating the transcriptional activity of daf-16/Forkhead box protein O, in concert with protein deacetylase sir-2.1/SIRT1, and perhaps acting independently of the Insulin/IGF-1-like signaling (IIS) mediated pathway. Negatively modulates responses to environmental stresses, including oxidative stress, heat stress, and exposure to heavy metals; acting via regulation of the transcription factors daf-16 and skn-1. May play a role in pharyngeal development via positive modulation of expression of sup-35. The protein is Host cell factor homolog hcf-1 of Caenorhabditis elegans.